Here is a 156-residue protein sequence, read N- to C-terminus: 17.7 kDa class II heat shock protein (156 aa).

Positions 39 to 156 constitute a sHSP domain; that stretch reads DAKAMAATPA…KPKTIQVQVA (118 aa).

The protein belongs to the small heat shock protein (HSP20) family. In terms of assembly, may form oligomeric structures.

The protein localises to the cytoplasm. This Arabidopsis thaliana (Mouse-ear cress) protein is 17.7 kDa class II heat shock protein (HSP17.7).